The primary structure comprises 356 residues: Heparan sulfate 2-O-sulfotransferase 1 (356 aa).

Topologically, residues 1-11 (MGLLRIMLPPK) are cytoplasmic. A helical; Signal-anchor for type II membrane protein transmembrane segment spans residues 12-28 (LQLLAVLVFGVAVLFLE). Residues 24–51 (VLFLENQIQKLEESRGKLERAIARHEVR) are a coiled coil. Topologically, residues 29–356 (NQIQKLEESR…FYEKIYPKSN (328 aa)) are lumenal. The adenosine 3',5'-bisphosphate site is built by K83, T84, A85, S86, T87, and S88. 2 N-linked (GlcNAc...) asparagine glycosylation sites follow: N108 and N127. Residues H140 and H142 contribute to the active site. Adenosine 3',5'-bisphosphate-binding residues include R164 and S172. 2 disulfides stabilise this stretch: C201–C209 and C222–C228. Adenosine 3',5'-bisphosphate contacts are provided by Y279, S285, T290, and K293.

It belongs to the sulfotransferase 3 family. Homotrimer. As to expression, expressed in heart, limb, head and trunk. At stages 20 and 24, it is expressed in the most regions of the first and second pharyngeal arche. In both wing and leg buds, it is detected at the overlying ectoderm and mesenchyme throughout stages 21, 23 and 24.

The protein localises to the golgi apparatus membrane. Its function is as follows. Catalyzes the transfer of a sulfo group from 3'-phospho-5'-adenylyl sulfate (PAPS) to the 2-OH position of iduronic acid (IdoA) or glucuronic acid (GlcA) within the heparan sulfate (HS) chain and participates in HS biosynthesis. This Gallus gallus (Chicken) protein is Heparan sulfate 2-O-sulfotransferase 1.